Here is a 299-residue protein sequence, read N- to C-terminus: Ribosomal protein L11 methyltransferase (299 aa).

4 residues coordinate S-adenosyl-L-methionine: T152, G172, D194, and N234.

It belongs to the methyltransferase superfamily. PrmA family.

The protein resides in the cytoplasm. It catalyses the reaction L-lysyl-[protein] + 3 S-adenosyl-L-methionine = N(6),N(6),N(6)-trimethyl-L-lysyl-[protein] + 3 S-adenosyl-L-homocysteine + 3 H(+). In terms of biological role, methylates ribosomal protein L11. The chain is Ribosomal protein L11 methyltransferase from Geobacter sulfurreducens (strain ATCC 51573 / DSM 12127 / PCA).